The primary structure comprises 183 residues: Putative 3-methyladenine DNA glycosylase (183 aa).

The protein belongs to the DNA glycosylase MPG family.

This Legionella pneumophila (strain Lens) protein is Putative 3-methyladenine DNA glycosylase.